We begin with the raw amino-acid sequence, 127 residues long: Large ribosomal subunit protein bL19 (127 aa).

Belongs to the bacterial ribosomal protein bL19 family.

Functionally, this protein is located at the 30S-50S ribosomal subunit interface and may play a role in the structure and function of the aminoacyl-tRNA binding site. The polypeptide is Large ribosomal subunit protein bL19 (Jannaschia sp. (strain CCS1)).